Here is a 360-residue protein sequence, read N- to C-terminus: Protein Wnt-2 (360 aa).

The first 25 residues, 1 to 25 (MNAPLGGIWLWLPLLLTWLTPEVNS), serve as a signal peptide directing secretion. 11 disulfide bridges follow: Cys76–Cys87, Cys127–Cys135, Cys137–Cys157, Cys206–Cys220, Cys208–Cys215, Cys278–Cys309, Cys294–Cys304, Cys308–Cys348, Cys324–Cys339, Cys326–Cys336, and Cys331–Cys332. The O-palmitoleoyl serine; by PORCN moiety is linked to residue Ser212. Asn295 is a glycosylation site (N-linked (GlcNAc...) asparagine).

The protein belongs to the Wnt family. Post-translationally, palmitoleoylation is required for efficient binding to frizzled receptors. Depalmitoleoylation leads to Wnt signaling pathway inhibition. As to expression, expressed in brain in the thalamus, in fetal and adult lung and in placenta.

The protein resides in the secreted. It is found in the extracellular space. It localises to the extracellular matrix. Ligand for members of the frizzled family of seven transmembrane receptors. Functions in the canonical Wnt signaling pathway that results in activation of transcription factors of the TCF/LEF family. Functions as a upstream regulator of FGF10 expression. Plays an important role in embryonic lung development. May contribute to embryonic brain development by regulating the proliferation of dopaminergic precursors and neurons. In Homo sapiens (Human), this protein is Protein Wnt-2 (WNT2).